We begin with the raw amino-acid sequence, 400 residues long: Tyrosine--tRNA ligase 2 (400 aa).

The 'HIGH' region motif lies at 46 to 55 (PSAPDIHLGH). The 'KMSKS' region motif lies at 230 to 234 (KMSKS). Lysine 233 provides a ligand contact to ATP. Residues 339–399 (NNLIEAIVKI…GKKKIVKLLV (61 aa)) form the S4 RNA-binding domain.

It belongs to the class-I aminoacyl-tRNA synthetase family. TyrS type 2 subfamily. As to quaternary structure, homodimer.

It is found in the cytoplasm. It catalyses the reaction tRNA(Tyr) + L-tyrosine + ATP = L-tyrosyl-tRNA(Tyr) + AMP + diphosphate + H(+). Catalyzes the attachment of tyrosine to tRNA(Tyr) in a two-step reaction: tyrosine is first activated by ATP to form Tyr-AMP and then transferred to the acceptor end of tRNA(Tyr). This chain is Tyrosine--tRNA ligase 2, found in Clostridium acetobutylicum (strain ATCC 824 / DSM 792 / JCM 1419 / IAM 19013 / LMG 5710 / NBRC 13948 / NRRL B-527 / VKM B-1787 / 2291 / W).